Here is a 788-residue protein sequence, read N- to C-terminus: Autophagy-related protein 9 (788 aa).

Residues 1–171 are Cytoplasmic-facing; the sequence is MTDKSTFLSV…EAYMYYTGKG (171 aa). A compositionally biased stretch (basic and acidic residues) spans 32-42; that stretch reads ILRRVEEEHAQ. Residues 32–127 are disordered; that stretch reads ILRRVEEEHA…TGVANGGLPR (96 aa). A compositionally biased stretch (low complexity) spans 44–58; sequence SDNSNSDNDSGNDSD. Residues 101 to 112 are compositionally biased toward polar residues; that stretch reads SFAQGTKTQTPI. Residues 172 to 192 traverse the membrane as a helical segment; the sequence is LVSIILSRVLNMSTIMFVVVF. Residues 193–222 lie on the Lumenal side of the membrane; sequence STYLGSCIDYSKIKGSRTLDEVHVKQCYAK. Residues 223 to 243 traverse the membrane as a helical segment; that stretch reads LGSFHVFVLWTFFVLWFMKLF. Over 244 to 390 the chain is Cytoplasmic; sequence QYVKDIRRLV…QILSTGLRRR (147 aa). An intramembrane region is located at residue F391. At 392 to 479 the chain is on the cytoplasmic side; that stretch reads VFAAIMNVVF…PKEKTALVSK (88 aa). The chain crosses the membrane as a helical span at residues 480-500; that stretch reads FVSFIAGSFAAVLGIASLIDP. Topologically, residues 501-512 are lumenal; the sequence is ELFLMFEISANR. Residues 513–533 traverse the membrane as a helical segment; that stretch reads TVLFYIGVFGSILAVSRSLIP. At 534-579 the chain is on the cytoplasmic side; that stretch reads EETLVFDPEISLRYVAEFTHYLPPEWEGKLHTEQVKNEFSLMYEMR. Residues 580–600 lie within the membrane without spanning it; the sequence is LIILLKELASIFLAPFILYYS. Residues 601 to 788 lie on the Cytoplasmic side of the membrane; sequence LTQSCDDIVD…KKTDNMNLGA (188 aa). Residues 715 to 736 are disordered; it reads LSPAAPTATTATSGTATGAAPR. Over residues 716–734 the composition is skewed to low complexity; the sequence is SPAAPTATTATSGTATGAA.

It belongs to the ATG9 family. In terms of assembly, homotrimer; forms a homotrimer with a central pore that forms a path between the two membrane leaflets. Phosphorylated by ATG1. ATG1 phosphorylation is required for preautophagosome elongation.

It is found in the preautophagosomal structure membrane. The protein localises to the cytoplasmic vesicle membrane. It localises to the golgi apparatus membrane. The protein resides in the endoplasmic reticulum membrane. It carries out the reaction a 1,2-diacyl-sn-glycero-3-phosphocholine(in) = a 1,2-diacyl-sn-glycero-3-phosphocholine(out). The enzyme catalyses a 1,2-diacyl-sn-glycero-3-phospho-L-serine(in) = a 1,2-diacyl-sn-glycero-3-phospho-L-serine(out). It catalyses the reaction a 1,2-diacyl-sn-glycero-3-phosphoethanolamine(in) = a 1,2-diacyl-sn-glycero-3-phosphoethanolamine(out). The catalysed reaction is a 1,2-diacyl-sn-glycero-3-phospho-(1D-myo-inositol-3-phosphate)(in) = a 1,2-diacyl-sn-glycero-3-phospho-(1D-myo-inositol-3-phosphate)(out). Phospholipid scramblase involved in autophagy and cytoplasm to vacuole transport (Cvt) vesicle formation. Cycles between the preautophagosomal structure/phagophore assembly site (PAS) and the cytoplasmic vesicle pool and supplies membrane for the growing autophagosome. Lipid scramblase activity plays a key role in preautophagosomal structure/phagophore assembly by distributing the phospholipids that arrive through ATG2 from the cytoplasmic to the luminal leaflet of the bilayer, thereby driving autophagosomal membrane expansion. Required for mitophagy. Also involved in endoplasmic reticulum-specific autophagic process and is essential for the survival of cells subjected to severe ER stress. Different machineries are required for anterograde trafficking to the PAS during either the Cvt pathway or bulk autophagy and for retrograde trafficking. This Yarrowia lipolytica (strain CLIB 122 / E 150) (Yeast) protein is Autophagy-related protein 9.